The primary structure comprises 246 residues: Uridylate kinase (246 aa).

Residue 20-23 (KISG) coordinates ATP. Positions 28 to 33 (GDQGYG) are involved in allosteric activation by GTP. Gly62 serves as a coordination point for UMP. Residues Gly63 and Arg67 each coordinate ATP. Residues Asp82 and 143-150 (TGNPYFTT) each bind UMP. Residues Thr170, Tyr176, and Asp179 each coordinate ATP.

The protein belongs to the UMP kinase family. In terms of assembly, homohexamer.

The protein resides in the cytoplasm. It catalyses the reaction UMP + ATP = UDP + ADP. It participates in pyrimidine metabolism; CTP biosynthesis via de novo pathway; UDP from UMP (UMPK route): step 1/1. Allosterically activated by GTP. Inhibited by UTP. Functionally, catalyzes the reversible phosphorylation of UMP to UDP. In Cereibacter sphaeroides (strain ATCC 17025 / ATH 2.4.3) (Rhodobacter sphaeroides), this protein is Uridylate kinase.